The chain runs to 248 residues: 5'-nucleotidase SurE (248 aa).

A divalent metal cation is bound by residues Asp-8, Asp-9, Ser-39, and Asn-91.

The protein belongs to the SurE nucleotidase family. The cofactor is a divalent metal cation.

Its subcellular location is the cytoplasm. It carries out the reaction a ribonucleoside 5'-phosphate + H2O = a ribonucleoside + phosphate. In terms of biological role, nucleotidase that shows phosphatase activity on nucleoside 5'-monophosphates. This is 5'-nucleotidase SurE from Pseudoalteromonas atlantica (strain T6c / ATCC BAA-1087).